Here is a 328-residue protein sequence, read N- to C-terminus: D-cysteine desulfhydrase (328 aa).

Residue lysine 51 is modified to N6-(pyridoxal phosphate)lysine.

It belongs to the ACC deaminase/D-cysteine desulfhydrase family. In terms of assembly, homodimer. Pyridoxal 5'-phosphate serves as cofactor.

It carries out the reaction D-cysteine + H2O = hydrogen sulfide + pyruvate + NH4(+) + H(+). Catalyzes the alpha,beta-elimination reaction of D-cysteine and of several D-cysteine derivatives. It could be a defense mechanism against D-cysteine. This Escherichia coli O6:H1 (strain CFT073 / ATCC 700928 / UPEC) protein is D-cysteine desulfhydrase.